Consider the following 615-residue polypeptide: Alpha-1,3-galactosidase B (615 aa).

Residues 1–23 (MRTFLSLKTCLLSALLLCVNSIA) form the signal peptide. PbH1 repeat units lie at residues 282 to 313 (SKNISFNDVHIIPNTSKKRVLSGHDDGFHFMG), 423 to 445 (TPDAEIRNCHFGSCRARGLLVST), 446 to 467 (PGKVIIENNVFESSGSAILIAG), 478 to 500 (VKDVLIRNNDFRYPCNSSIYQFC), 520 to 541 (HRNIRIMDNTFHLFDYPILFAR), and 543 to 573 (VNGLTFSSNTLIRDTTYQPYHYRKEGITLEA).

It belongs to the glycosyl hydrolase 110 family. B subfamily.

The catalysed reaction is Hydrolysis of terminal, non-reducing branched (1-&gt;3)-alpha-D-galactosidic residues, producing free D-galactose.. The enzyme catalyses Hydrolysis of terminal, non-reducing linear (1-&gt;3)-alpha-D-galactosidic residues, producing free D-galactose.. It carries out the reaction Hydrolysis of terminal, non-reducing alpha-D-galactose residues in alpha-D-galactosides, including galactose oligosaccharides, galactomannans and galactolipids.. Its function is as follows. Alpha-galactosidase. Removes both branched alpha-1,3-linked galactose residues of blood group B antigens and linear alpha-1,3-linked galactose structures. This chain is Alpha-1,3-galactosidase B (glaB), found in Bacteroides thetaiotaomicron (strain ATCC 29148 / DSM 2079 / JCM 5827 / CCUG 10774 / NCTC 10582 / VPI-5482 / E50).